A 20-amino-acid chain; its full sequence is Tetracycline resistance leader peptide (20 aa).

This Bacillus cereus protein is Tetracycline resistance leader peptide (tetL).